The primary structure comprises 80 residues: Cell division protein ZapB (80 aa).

A coiled-coil region spans residues 3–80 (FEVLEQLESK…ALLGKMDEVE (78 aa)).

This sequence belongs to the ZapB family. As to quaternary structure, homodimer. The ends of the coiled-coil dimer bind to each other, forming polymers. Interacts with FtsZ.

The protein localises to the cytoplasm. Its function is as follows. Non-essential, abundant cell division factor that is required for proper Z-ring formation. It is recruited early to the divisome by direct interaction with FtsZ, stimulating Z-ring assembly and thereby promoting cell division earlier in the cell cycle. Its recruitment to the Z-ring requires functional FtsA or ZipA. The protein is Cell division protein ZapB of Vibrio parahaemolyticus serotype O3:K6 (strain RIMD 2210633).